The primary structure comprises 392 residues: HCLS1-binding protein 3 (392 aa).

The residue at position 1 (M1) is an N-acetylmethionine. Phosphoserine occurs at positions 3, 139, and 194. In terms of domain architecture, PX spans 19–142 (GLDLTVPQHQ…EFLGTRSPGA (124 aa)). Disordered stretches follow at residues 138-162 (RSPG…QTGN), 174-265 (DQVA…PLKL), and 319-364 (GAEP…KPQE). Over residues 190–201 (DAEESLEEEEAL) the composition is skewed to acidic residues. Positions 208–220 (RSKKPKKHPKVAV) are enriched in basic residues. S249 carries the phosphoserine modification. The segment covering 325–335 (KPQLKPKPPVA) has biased composition (pro residues). An N6-acetyllysine modification is found at K337.

As to quaternary structure, binds HCLS1. Interacts with the SH3 domain of HCLS1 in vitro.

In terms of biological role, may be a modulator of IL-2 signaling. This Homo sapiens (Human) protein is HCLS1-binding protein 3 (HS1BP3).